Reading from the N-terminus, the 356-residue chain is UDP-3-O-acylglucosamine N-acyltransferase (356 aa).

The Proton acceptor role is filled by H242.

It belongs to the transferase hexapeptide repeat family. LpxD subfamily. As to quaternary structure, homotrimer.

The catalysed reaction is a UDP-3-O-[(3R)-3-hydroxyacyl]-alpha-D-glucosamine + a (3R)-hydroxyacyl-[ACP] = a UDP-2-N,3-O-bis[(3R)-3-hydroxyacyl]-alpha-D-glucosamine + holo-[ACP] + H(+). The protein operates within bacterial outer membrane biogenesis; LPS lipid A biosynthesis. In terms of biological role, catalyzes the N-acylation of UDP-3-O-acylglucosamine using 3-hydroxyacyl-ACP as the acyl donor. Is involved in the biosynthesis of lipid A, a phosphorylated glycolipid that anchors the lipopolysaccharide to the outer membrane of the cell. In Acinetobacter baylyi (strain ATCC 33305 / BD413 / ADP1), this protein is UDP-3-O-acylglucosamine N-acyltransferase.